The primary structure comprises 779 residues: Acyl-CoA dehydrogenase family member 11 (779 aa).

Residue lysine 175 is modified to N6-acetyllysine. Serine 210 is subject to Phosphoserine. Phosphotyrosine is present on tyrosine 323. An N6-succinyllysine mark is found at lysine 368 and lysine 390. Residues 503–513 (FCMTEPNVSSS), 511–513 (SSS), 537–539 (WSS), and serine 539 contribute to the FAD site. A substrate-binding site is contributed by serine 513. 628–631 (GPGR) provides a ligand contact to substrate. FAD-binding positions include arginine 656, glutamine 726, and 726 to 730 (QVHGG). Position 754 (glycine 754) interacts with substrate. FAD is bound by residues 755 to 757 (PDE) and glutamate 757. The residue at position 765 (lysine 765) is an N6-acetyllysine.

The protein belongs to the acyl-CoA dehydrogenase family. Homodimer. It depends on FAD as a cofactor.

The protein localises to the peroxisome. It is found in the mitochondrion membrane. The catalysed reaction is a 2,3-saturated acyl-CoA + oxidized [electron-transfer flavoprotein] + H(+) = a (2E)-enoyl-CoA + reduced [electron-transfer flavoprotein]. The enzyme catalyses docosanoyl-CoA + oxidized [electron-transfer flavoprotein] + H(+) = (2E)-docosenoyl-CoA + reduced [electron-transfer flavoprotein]. It catalyses the reaction tetracosanoyl-CoA + oxidized [electron-transfer flavoprotein] + H(+) = (2E)-tetracosenoyl-CoA + reduced [electron-transfer flavoprotein]. It carries out the reaction eicosanoyl-CoA + oxidized [electron-transfer flavoprotein] + H(+) = (2E)-eicosenoyl-CoA + reduced [electron-transfer flavoprotein]. The catalysed reaction is hexacosanoyl-CoA + oxidized [electron-transfer flavoprotein] + H(+) = (2E)-hexacosenoyl-CoA + reduced [electron-transfer flavoprotein]. The enzyme catalyses tricosanoyl-CoA + oxidized [electron-transfer flavoprotein] + H(+) = (2E)-tricosenoyl-CoA + reduced [electron-transfer flavoprotein]. It participates in lipid metabolism; fatty acid beta-oxidation. Functionally, acyl-CoA dehydrogenase, that exhibits maximal activity towards saturated C22-CoA. Probably participates in beta-oxydation and energy production but could also play a role in the metabolism of specific fatty acids to control fatty acids composition of cellular lipids in brain. The sequence is that of Acyl-CoA dehydrogenase family member 11 (Acad11) from Rattus norvegicus (Rat).